The primary structure comprises 294 residues: Ribosomal RNA small subunit methyltransferase I (294 aa).

Belongs to the methyltransferase superfamily. RsmI family.

Its subcellular location is the cytoplasm. It catalyses the reaction cytidine(1402) in 16S rRNA + S-adenosyl-L-methionine = 2'-O-methylcytidine(1402) in 16S rRNA + S-adenosyl-L-homocysteine + H(+). In terms of biological role, catalyzes the 2'-O-methylation of the ribose of cytidine 1402 (C1402) in 16S rRNA. This chain is Ribosomal RNA small subunit methyltransferase I, found in Mesorhizobium japonicum (strain LMG 29417 / CECT 9101 / MAFF 303099) (Mesorhizobium loti (strain MAFF 303099)).